A 929-amino-acid polypeptide reads, in one-letter code: Isoleucine--tRNA ligase (929 aa).

The 'HIGH' region motif lies at 58 to 68 (PYANGDIHIGH). Glu563 is an L-isoleucyl-5'-AMP binding site. Positions 605–609 (KMSKS) match the 'KMSKS' region motif. Lys608 lines the ATP pocket. Positions 892, 895, 912, and 915 each coordinate Zn(2+).

Belongs to the class-I aminoacyl-tRNA synthetase family. IleS type 1 subfamily. In terms of assembly, monomer. Requires Zn(2+) as cofactor.

The protein localises to the cytoplasm. The catalysed reaction is tRNA(Ile) + L-isoleucine + ATP = L-isoleucyl-tRNA(Ile) + AMP + diphosphate. Catalyzes the attachment of isoleucine to tRNA(Ile). As IleRS can inadvertently accommodate and process structurally similar amino acids such as valine, to avoid such errors it has two additional distinct tRNA(Ile)-dependent editing activities. One activity is designated as 'pretransfer' editing and involves the hydrolysis of activated Val-AMP. The other activity is designated 'posttransfer' editing and involves deacylation of mischarged Val-tRNA(Ile). In Neisseria meningitidis serogroup A / serotype 4A (strain DSM 15465 / Z2491), this protein is Isoleucine--tRNA ligase.